The following is a 266-amino-acid chain: tRNA pseudouridine synthase A (266 aa).

The active-site Nucleophile is Asp-57. Tyr-115 is a substrate binding site.

Belongs to the tRNA pseudouridine synthase TruA family. As to quaternary structure, homodimer.

The enzyme catalyses uridine(38/39/40) in tRNA = pseudouridine(38/39/40) in tRNA. In terms of biological role, formation of pseudouridine at positions 38, 39 and 40 in the anticodon stem and loop of transfer RNAs. The sequence is that of tRNA pseudouridine synthase A from Buchnera aphidicola subsp. Acyrthosiphon pisum (strain APS) (Acyrthosiphon pisum symbiotic bacterium).